We begin with the raw amino-acid sequence, 151 residues long: RNA polymerase-binding transcription factor DksA (151 aa).

A coiled-coil region spans residues 34–54 (EAQLSHFKRILEAWRNQLRDE). Zn(2+) contacts are provided by C114, C117, C135, and C138. A dksA C4-type zinc finger spans residues 114 to 138 (CESCGVEIGIRRLEARPTADLCIDC).

This sequence belongs to the DksA family. In terms of assembly, interacts directly with the RNA polymerase.

It is found in the cytoplasm. In terms of biological role, transcription factor that acts by binding directly to the RNA polymerase (RNAP). Required for negative regulation of rRNA expression and positive regulation of several amino acid biosynthesis promoters. Also required for regulation of fis expression. This Salmonella typhi protein is RNA polymerase-binding transcription factor DksA.